Here is a 173-residue protein sequence, read N- to C-terminus: MDIAIQHPWFKRALGPFYPSRLFDQFFGEGLFEYDLLPFLSSTISPYYRQSLFRTVLDSGISEVRSDRDKFVIFLDVKHFSPEDLTVKVQEDFVEIHGKHNERQDDHGYISREFHRRYRLPSNVDQSALSCSLSADGMLTFSGPKIPSGVDAGHSERAIPVSREEKPSSAPSS.

Met-1 bears the N-acetylmethionine mark. The required for complex formation with BFSP1 and BFSP2 stretch occupies residues 1 to 63 (MDIAIQHPWF…RTVLDSGISE (63 aa)). Gln-6 carries the post-translational modification Deamidated glutamine; partial. Phosphoserine is present on Ser-45. Deamidated glutamine; partial is present on Gln-50. Residues 52–162 (LFRTVLDSGI…GHSERAIPVS (111 aa)) enclose the sHSP domain. Position 70 is an N6-acetyllysine (Lys-70). At Gln-90 the chain carries Deamidated glutamine; partial. Lys-99 carries the N6-acetyllysine modification. His-100 contacts Zn(2+). At Asn-101 the chain carries Deamidated asparagine; partial. Positions 102 and 107 each coordinate Zn(2+). A Phosphoserine modification is found at Ser-122. Asn-123 bears the Deamidated asparagine; partial mark. The tract at residues 144 to 173 (PKIPSGVDAGHSERAIPVSREEKPSSAPSS) is disordered. Basic and acidic residues predominate over residues 153-167 (GHSERAIPVSREEKP). His-154 contacts Zn(2+). Ser-162 is a glycosylation site (O-linked (GlcNAc) serine).

The protein belongs to the small heat shock protein (HSP20) family. In terms of assembly, heteromer composed of three CRYAA and one CRYAB subunits. Inter-subunit bridging via zinc ions enhances stability, which is crucial as there is no protein turn over in the lens. Can also form homodimers and homotetramers (dimers of dimers) which serve as the building blocks of homooligomers. Within homooligomers, the zinc-binding motif is created from residues of 3 different molecules. His-100 and Glu-102 from one molecule are ligands of the zinc ion, and His-107 and His-154 residues from additional molecules complete the site with tetrahedral coordination geometry. Part of a complex required for lens intermediate filament formation composed of BFSP1, BFSP2 and CRYAA. Acetylation at Lys-70 may increase chaperone activity. Post-translationally, undergoes age-dependent proteolytical cleavage at the C-terminus.

Its subcellular location is the cytoplasm. The protein resides in the nucleus. Functionally, contributes to the transparency and refractive index of the lens. Acts as a chaperone, preventing aggregation of various proteins under a wide range of stress conditions. Required for the correct formation of lens intermediate filaments as part of a complex composed of BFSP1, BFSP2 and CRYAA. The chain is Alpha-crystallin A chain (CRYAA) from Giraffa camelopardalis (Giraffe).